The chain runs to 291 residues: ATP synthase gamma chain (291 aa).

This sequence belongs to the ATPase gamma chain family. In terms of assembly, F-type ATPases have 2 components, CF(1) - the catalytic core - and CF(0) - the membrane proton channel. CF(1) has five subunits: alpha(3), beta(3), gamma(1), delta(1), epsilon(1). CF(0) has three main subunits: a, b and c.

The protein localises to the cell inner membrane. Functionally, produces ATP from ADP in the presence of a proton gradient across the membrane. The gamma chain is believed to be important in regulating ATPase activity and the flow of protons through the CF(0) complex. The chain is ATP synthase gamma chain from Chlorobium limicola (strain DSM 245 / NBRC 103803 / 6330).